We begin with the raw amino-acid sequence, 75 residues long: UPF0270 protein PSPPH_1506 (75 aa).

This sequence belongs to the UPF0270 family.

The chain is UPF0270 protein PSPPH_1506 from Pseudomonas savastanoi pv. phaseolicola (strain 1448A / Race 6) (Pseudomonas syringae pv. phaseolicola (strain 1448A / Race 6)).